Reading from the N-terminus, the 342-residue chain is uncharacterized protein (342 aa).

The protein belongs to the proline racemase family.

This is an uncharacterized protein from Brucella canis (strain ATCC 23365 / NCTC 10854 / RM-666).